Here is a 470-residue protein sequence, read N- to C-terminus: Spliceosome-associated protein CWC27 homolog (470 aa).

The region spanning Thr11 to Val166 is the PPIase cyclophilin-type domain. Basic and acidic residues-rich tracts occupy residues Asp172 to Lys192 and Ser230 to Lys240. Disordered regions lie at residues Asp172–Glu377 and Ser428–Arg470. The segment covering Gly254–Arg272 has biased composition (acidic residues). Composition is skewed to basic and acidic residues over residues Glu273–Glu337 and Leu356–Lys367. The stretch at Glu281 to Gly332 forms a coiled coil.

This sequence belongs to the cyclophilin-type PPIase family. In terms of assembly, part of the activated spliceosome B/catalytic step 1 spliceosome, one of the forms of the spliceosome which has a well-formed active site but still cannot catalyze the branching reaction and is composed at least of 52 proteins, the U2, U5 and U6 snRNAs and the pre-mRNA. Recruited during early steps of activated spliceosome B maturation, it is probably one of the first proteins released from this complex as he matures to the spliceosome C complex. Component of the minor spliceosome, which splices U12-type introns.

Its subcellular location is the nucleus. Functionally, as part of the spliceosome, plays a role in pre-mRNA splicing. Probable inactive PPIase with no peptidyl-prolyl cis-trans isomerase activity. In Danio rerio (Zebrafish), this protein is Spliceosome-associated protein CWC27 homolog (cwc27).